The primary structure comprises 718 residues: Putative proline-rich receptor-like protein kinase PERK11 (718 aa).

The segment at 1–256 is disordered; it reads MDKVQQQADL…GGTSQQSNES (256 aa). Residues 1–262 lie on the Extracellular side of the membrane; it reads MDKVQQQADL…SNESNYTEKT (262 aa). 3 stretches are compositionally biased toward pro residues: residues 45 to 105, 115 to 132, and 157 to 167; these read ATSP…PPQS, IPFP…PPPS, and LPSPPSTPFSP. Composition is skewed to low complexity over residues 168–203 and 211–244; these read PSQE…LQPL and SNRV…ANSN. Residues asparagine 231, asparagine 254, and asparagine 257 are each glycosylated (N-linked (GlcNAc...) asparagine). The chain crosses the membrane as a helical span at residues 263-283; sequence VIGIGIAGVLVILFIAGVFFV. Topologically, residues 284 to 718 are cytoplasmic; the sequence is RRKQKKGSSS…RAFNTSHRNH (435 aa). Residues 314 to 348 form a disordered region; sequence HYRQKPGNGNSSAQNSSPDTNSLGNPKHGRGTPDS. A compositionally biased stretch (polar residues) spans 320-337; sequence GNGNSSAQNSSPDTNSLG. Threonine 359 bears the Phosphothreonine mark. Residues 370 to 649 form the Protein kinase domain; sequence FCKSFVVGEG…VRALDTRDDL (280 aa). ATP contacts are provided by residues 376-384 and lysine 398; that span reads VGEGGFGCV. At tyrosine 443 the chain carries Phosphotyrosine. The Proton acceptor role is filled by aspartate 494. Phosphoserine occurs at positions 498 and 527. Phosphothreonine occurs at positions 528 and 533. At tyrosine 541 the chain carries Phosphotyrosine. Positions 683–718 are disordered; the sequence is SSDLGTNTGYYPSQDYATSHEYESESRAFNTSHRNH. Polar residues-rich tracts occupy residues 685–699 and 709–718; these read DLGT…QDYA and RAFNTSHRNH.

It belongs to the protein kinase superfamily. Ser/Thr protein kinase family. Mostly expressed in flower buds.

The protein resides in the cell membrane. It catalyses the reaction L-seryl-[protein] + ATP = O-phospho-L-seryl-[protein] + ADP + H(+). It carries out the reaction L-threonyl-[protein] + ATP = O-phospho-L-threonyl-[protein] + ADP + H(+). This is Putative proline-rich receptor-like protein kinase PERK11 (PERK11) from Arabidopsis thaliana (Mouse-ear cress).